A 439-amino-acid chain; its full sequence is Cobyrinate a,c-diamide synthase (439 aa).

The tract at residues 214-235 (ETARAPPEVATTERNTGDSPAD) is disordered. Residues 237–428 (RVAVAQDSAF…CHCHGESGAF (192 aa)) enclose the GATase cobBQ-type domain. Cys-317 serves as the catalytic Nucleophile.

Belongs to the CobB/CbiA family. Mg(2+) is required as a cofactor.

The enzyme catalyses cob(II)yrinate + 2 L-glutamine + 2 ATP + 2 H2O = cob(II)yrinate a,c diamide + 2 L-glutamate + 2 ADP + 2 phosphate + 2 H(+). It participates in cofactor biosynthesis; adenosylcobalamin biosynthesis; cob(II)yrinate a,c-diamide from sirohydrochlorin (anaerobic route): step 10/10. Functionally, catalyzes the ATP-dependent amidation of the two carboxylate groups at positions a and c of cobyrinate, using either L-glutamine or ammonia as the nitrogen source. This Haloarcula marismortui (strain ATCC 43049 / DSM 3752 / JCM 8966 / VKM B-1809) (Halobacterium marismortui) protein is Cobyrinate a,c-diamide synthase.